The following is a 351-amino-acid chain: Anthranilate phosphoribosyltransferase (351 aa).

Residues glycine 80, 83-84 (GD), threonine 88, 90-93 (NIST), 108-116 (KHGNRSVTS), and serine 120 each bind 5-phospho-alpha-D-ribose 1-diphosphate. Glycine 80 serves as a coordination point for anthranilate. Serine 92 contributes to the Mg(2+) binding site. Position 111 (asparagine 111) interacts with anthranilate. Residue arginine 166 coordinates anthranilate. Mg(2+) contacts are provided by aspartate 229 and glutamate 230.

The protein belongs to the anthranilate phosphoribosyltransferase family. As to quaternary structure, homodimer. Mg(2+) serves as cofactor.

It carries out the reaction N-(5-phospho-beta-D-ribosyl)anthranilate + diphosphate = 5-phospho-alpha-D-ribose 1-diphosphate + anthranilate. The protein operates within amino-acid biosynthesis; L-tryptophan biosynthesis; L-tryptophan from chorismate: step 2/5. Its function is as follows. Catalyzes the transfer of the phosphoribosyl group of 5-phosphorylribose-1-pyrophosphate (PRPP) to anthranilate to yield N-(5'-phosphoribosyl)-anthranilate (PRA). This Chlorobium phaeovibrioides (strain DSM 265 / 1930) (Prosthecochloris vibrioformis (strain DSM 265)) protein is Anthranilate phosphoribosyltransferase.